Reading from the N-terminus, the 259-residue chain is 3'-5' ssDNA/RNA exonuclease TatD (259 aa).

Residues E92, H128, and H153 each contribute to the a divalent metal cation site.

The protein belongs to the metallo-dependent hydrolases superfamily. TatD-type hydrolase family. TatD subfamily. As to quaternary structure, monomer. Mg(2+) is required as a cofactor.

The protein resides in the cytoplasm. Functionally, 3'-5' exonuclease that prefers single-stranded DNA and RNA. May play a role in the H(2)O(2)-induced DNA damage repair. This is 3'-5' ssDNA/RNA exonuclease TatD from Erwinia amylovora (strain ATCC 49946 / CCPPB 0273 / Ea273 / 27-3).